We begin with the raw amino-acid sequence, 431 residues long: 3-phosphoshikimate 1-carboxyvinyltransferase (431 aa).

Lysine 22, serine 23, and arginine 27 together coordinate 3-phosphoshikimate. Position 22 (lysine 22) interacts with phosphoenolpyruvate. Glycine 94 and arginine 122 together coordinate phosphoenolpyruvate. Residues serine 168, serine 169, glutamine 170, serine 196, aspartate 315, and lysine 342 each coordinate 3-phosphoshikimate. Glutamine 170 serves as a coordination point for phosphoenolpyruvate. The Proton acceptor role is filled by aspartate 315. Phosphoenolpyruvate-binding residues include arginine 346, arginine 390, and lysine 414.

The protein belongs to the EPSP synthase family. Monomer.

It is found in the cytoplasm. The enzyme catalyses 3-phosphoshikimate + phosphoenolpyruvate = 5-O-(1-carboxyvinyl)-3-phosphoshikimate + phosphate. The protein operates within metabolic intermediate biosynthesis; chorismate biosynthesis; chorismate from D-erythrose 4-phosphate and phosphoenolpyruvate: step 6/7. Its function is as follows. Catalyzes the transfer of the enolpyruvyl moiety of phosphoenolpyruvate (PEP) to the 5-hydroxyl of shikimate-3-phosphate (S3P) to produce enolpyruvyl shikimate-3-phosphate and inorganic phosphate. The sequence is that of 3-phosphoshikimate 1-carboxyvinyltransferase from Nitrosomonas europaea (strain ATCC 19718 / CIP 103999 / KCTC 2705 / NBRC 14298).